A 765-amino-acid chain; its full sequence is 5-methyltetrahydropteroyltriglutamate--homocysteine methyltransferase 2 (765 aa).

Residues lysine 18 and asparagine 116 each coordinate 5-methyltetrahydropteroyltri-L-glutamate. L-homocysteine contacts are provided by residues 437 to 439 (IGS) and glutamate 490. L-methionine-binding positions include 437–439 (IGS) and glutamate 490. Residues aspartate 495, tyrosine 518, 521–522 (RC), and tryptophan 567 contribute to the 5-methyltetrahydropteroyltri-L-glutamate site. Residue aspartate 605 coordinates L-homocysteine. Position 605 (aspartate 605) interacts with L-methionine. Zn(2+) is bound by residues histidine 647, cysteine 649, histidine 658, aspartate 662, and glutamate 671. Histidine 701 serves as the catalytic Proton donor. Cysteine 733 provides a ligand contact to Zn(2+).

The protein belongs to the vitamin-B12 independent methionine synthase family. The cofactor is Zn(2+). Expressed in leaves, stems and siliques.

It localises to the cytoplasm. Its subcellular location is the cytosol. It catalyses the reaction 5-methyltetrahydropteroyltri-L-glutamate + L-homocysteine = tetrahydropteroyltri-L-glutamate + L-methionine. It functions in the pathway amino-acid biosynthesis; L-methionine biosynthesis via de novo pathway; L-methionine from L-homocysteine (MetE route): step 1/1. Catalyzes the transfer of a methyl group from 5-methyltetrahydrofolate to homocysteine resulting in methionine formation. In Arabidopsis thaliana (Mouse-ear cress), this protein is 5-methyltetrahydropteroyltriglutamate--homocysteine methyltransferase 2 (MS2).